Here is a 480-residue protein sequence, read N- to C-terminus: tRNA-2-methylthio-N(6)-dimethylallyladenosine synthase (480 aa).

Residues 2–118 (NRVHIKTYGC…VPGYLDNLRA (117 aa)) form the MTTase N-terminal domain. Residues cysteine 11, cysteine 47, and cysteine 81 each contribute to the [4Fe-4S] cluster site. The disordered stretch occupies residues 145–169 (DHLLPQDSDSDSQPSTLNSQLRGAA). The segment covering 149–159 (PQDSDSDSQPS) has biased composition (low complexity). Residues 171–405 (PPPQITAFVS…LELLRQNSER (235 aa)) enclose the Radical SAM core domain. Residues cysteine 185, cysteine 189, and cysteine 192 each contribute to the [4Fe-4S] cluster site. The TRAM domain maps to 408–470 (ALLLDTVEEV…VSTLYGELML (63 aa)).

The protein belongs to the methylthiotransferase family. MiaB subfamily. As to quaternary structure, monomer. Requires [4Fe-4S] cluster as cofactor.

It is found in the cytoplasm. It catalyses the reaction N(6)-dimethylallyladenosine(37) in tRNA + (sulfur carrier)-SH + AH2 + 2 S-adenosyl-L-methionine = 2-methylsulfanyl-N(6)-dimethylallyladenosine(37) in tRNA + (sulfur carrier)-H + 5'-deoxyadenosine + L-methionine + A + S-adenosyl-L-homocysteine + 2 H(+). In terms of biological role, catalyzes the methylthiolation of N6-(dimethylallyl)adenosine (i(6)A), leading to the formation of 2-methylthio-N6-(dimethylallyl)adenosine (ms(2)i(6)A) at position 37 in tRNAs that read codons beginning with uridine. The polypeptide is tRNA-2-methylthio-N(6)-dimethylallyladenosine synthase (Opitutus terrae (strain DSM 11246 / JCM 15787 / PB90-1)).